The sequence spans 132 residues: Large-conductance mechanosensitive channel (132 aa).

The next 3 membrane-spanning stretches (helical) occupy residues 14 to 34, 38 to 58, and 69 to 89; these read VIDL…VSSL, IITP…LKIT, and FIQT…FVKV.

The protein belongs to the MscL family. As to quaternary structure, homopentamer.

It localises to the cell membrane. Its function is as follows. Channel that opens in response to stretch forces in the membrane lipid bilayer. May participate in the regulation of osmotic pressure changes within the cell. This is Large-conductance mechanosensitive channel from Bacillus thuringiensis (strain Al Hakam).